The sequence spans 808 residues: DNA replication licensing factor MCM3 (808 aa).

Ala2 carries the post-translational modification N-acetylalanine. Residues Ser160 and Ser275 each carry the phosphoserine modification. An N6-acetyllysine modification is found at Lys293. An MCM domain is found at 295-502 (IFDQLAKSLA…QDREISDHVL (208 aa)). Positions 353, 393, 394, 395, and 397 each coordinate ADP. The short motif at 477 to 480 (SRFD) is the Arginine finger element. Ala523 is an ATP binding site. Position 535 is a phosphoserine; by ATM (Ser535). At Lys547 the chain carries N6-acetyllysine. Ser611 bears the Phosphoserine mark. The disordered stretch occupies residues 662–739 (KKRKKRSEDE…ETKESQKVEL (78 aa)). Residue Arg664 participates in ATP binding. Ser668 and Ser672 each carry phosphoserine. Composition is skewed to acidic residues over residues 670-681 (DESETEDEEEKS) and 704-717 (SYDP…EEEM). A Phosphothreonine modification is found at Thr674. A Phosphoserine modification is found at Ser681. The residue at position 708 (Tyr708) is a Phosphotyrosine. Residue Ser711 is modified to Phosphoserine. Residues Thr713, Thr722, and Thr725 each carry the phosphothreonine modification. The span at 727-739 (DSQETKESQKVEL) shows a compositional bias: basic and acidic residues. Ser728 and Ser734 each carry phosphoserine.

This sequence belongs to the MCM family. Component of the MCM2-7 complex. The complex forms a toroidal hexameric ring with the proposed subunit order MCM2-MCM6-MCM4-MCM7-MCM3-MCM5. Component of the CMG helicase complex, a hexameric ring of related MCM2-7 subunits stabilized by CDC45 and the tetrameric GINS complex. Associated with the replication-specific DNA polymerase alpha. Interacts with MCMBP. Interacts with ANKRD17. Interacts with MCM3AP isoform MCM3AP; this interaction leads to MCM3 acetylation. Acetylated by MCM3AP. Post-translationally, O-glycosylated (O-GlcNAcylated), in a cell cycle-dependent manner.

It is found in the nucleus. It localises to the chromosome. It catalyses the reaction ATP + H2O = ADP + phosphate + H(+). Acts as a component of the MCM2-7 complex (MCM complex) which is the replicative helicase essential for 'once per cell cycle' DNA replication initiation and elongation in eukaryotic cells. Core component of CDC45-MCM-GINS (CMG) helicase, the molecular machine that unwinds template DNA during replication, and around which the replisome is built. The active ATPase sites in the MCM2-7 ring are formed through the interaction surfaces of two neighboring subunits such that a critical structure of a conserved arginine finger motif is provided in trans relative to the ATP-binding site of the Walker A box of the adjacent subunit. The six ATPase active sites, however, are likely to contribute differentially to the complex helicase activity. Required for the entry in S phase and for cell division. In Homo sapiens (Human), this protein is DNA replication licensing factor MCM3.